Here is a 156-residue protein sequence, read N- to C-terminus: Small ribosomal subunit protein uS7 (156 aa).

This sequence belongs to the universal ribosomal protein uS7 family. In terms of assembly, part of the 30S ribosomal subunit. Contacts proteins S9 and S11.

Its function is as follows. One of the primary rRNA binding proteins, it binds directly to 16S rRNA where it nucleates assembly of the head domain of the 30S subunit. Is located at the subunit interface close to the decoding center, probably blocks exit of the E-site tRNA. The protein is Small ribosomal subunit protein uS7 of Burkholderia multivorans (strain ATCC 17616 / 249).